We begin with the raw amino-acid sequence, 386 residues long: Protein RecA (386 aa).

An ATP-binding site is contributed by 76–83 (GPESSGKT). A disordered region spans residues 362–386 (FDDEDDDFDASTAPAGTFTEVTTEN).

This sequence belongs to the RecA family.

It is found in the cytoplasm. In terms of biological role, can catalyze the hydrolysis of ATP in the presence of single-stranded DNA, the ATP-dependent uptake of single-stranded DNA by duplex DNA, and the ATP-dependent hybridization of homologous single-stranded DNAs. It interacts with LexA causing its activation and leading to its autocatalytic cleavage. This chain is Protein RecA, found in Corynebacterium efficiens (strain DSM 44549 / YS-314 / AJ 12310 / JCM 11189 / NBRC 100395).